Here is a 246-residue protein sequence, read N- to C-terminus: Bacteriorhodopsin-II-like protein (246 aa).

Helical transmembrane passes span 7–27 (EATW…YFAV), 45–65 (TLIP…LGVI), 82–102 (YADW…VAGA), 107–127 (LYKL…GSMM), 135–155 (IVWW…LLGE), 182–202 (WALY…IIAV), and 205–225 (EIML…AVLL). Residue lysine 217 is modified to N6-(retinylidene)lysine.

This sequence belongs to the archaeal/bacterial/fungal opsin family. Post-translationally, the covalent binding of retinal to the apoprotein, bacterioopsin, generates bacteriorhodopsin.

It localises to the cell membrane. Has no proton-pumping activity but is potentially capable of functioning as a sensory SRII-like protein. The chromophore contains 36.5% all-trans-, 7.6% 11-cis- and 56.4% 13-cis-retinal in the dark and 30.1% 11-cis- and 47.7% 13-cis-retinal upon illumination with &gt;460 nm light. This Haloquadratum walsbyi (strain DSM 16790 / HBSQ001) protein is Bacteriorhodopsin-II-like protein (bop2).